The following is a 282-amino-acid chain: MALVLDGRALAKQIEENLLVRVEALKAKTGRTPILATILVGDDGASATYVRMKGNACRRVGMDSLKIELPQETTTEQLLAEIEKLNANPDVHGILLQHPVPAQIDERACFDAISLAKDVDGVTCLGFGRMAMGEAAYGSATPAGIMTILKENNIEIAGKHAVVVGRSAILGKPMAMMLLQANATVTICHSRTQNLPELVKQADIIVGAVGKAELIQKDWIKQGAVVVDAGFHPRDGGGVGDIQLQGIEEIASAYTPVPGGVGPMTITTLIRQTVEAAEKALG.

NADP(+)-binding positions include 165-167 and Ser190; that span reads GRS.

The protein belongs to the tetrahydrofolate dehydrogenase/cyclohydrolase family. In terms of assembly, homodimer.

It carries out the reaction (6R)-5,10-methylene-5,6,7,8-tetrahydrofolate + NADP(+) = (6R)-5,10-methenyltetrahydrofolate + NADPH. The catalysed reaction is (6R)-5,10-methenyltetrahydrofolate + H2O = (6R)-10-formyltetrahydrofolate + H(+). The protein operates within one-carbon metabolism; tetrahydrofolate interconversion. Catalyzes the oxidation of 5,10-methylenetetrahydrofolate to 5,10-methenyltetrahydrofolate and then the hydrolysis of 5,10-methenyltetrahydrofolate to 10-formyltetrahydrofolate. The sequence is that of Bifunctional protein FolD from Acinetobacter baumannii (strain ATCC 17978 / DSM 105126 / CIP 53.77 / LMG 1025 / NCDC KC755 / 5377).